The sequence spans 425 residues: uncharacterized protein (425 aa).

Residues 2 to 53 (SFNLLDLPIVPRQKALKYLEPIDLFELSLCSKRMAQSVRDLKIEASAHFITL) enclose the F-box domain.

This is an uncharacterized protein from Caenorhabditis elegans.